The sequence spans 1154 residues: Large proline-rich protein BAG6 (1154 aa).

Methionine 1 carries the N-acetylmethionine modification. Residues 17–92 (LEVLVKTLDS…HLVERAPPQT (76 aa)) enclose the Ubiquitin-like domain. Disordered regions lie at residues 87 to 125 (RAPP…ASVH), 186 to 274 (RGGT…HPSP), 387 to 442 (TMTG…SSHP), 463 to 531 (QDSG…QGAG), and 568 to 626 (AQAQ…SAAD). Serine 96 is subject to Phosphoserine. The segment covering 96–112 (SGASSGTGSASATHGGA) has biased composition (low complexity). Threonine 117 is subject to Phosphothreonine. Over residues 209–218 (VALNSQTSEP) the composition is skewed to polar residues. Repeat unit 1 spans residues 237–271 (RPPTQTPELAPSGPAPAGPAPAGPAPAPETNAPNH). Residues 237–658 (RPPTQTPELA…MASPTITVAM (422 aa)) form a 4 X 29 AA approximate repeats region. The span at 249 to 263 (GPAPAGPAPAGPAPA) shows a compositional bias: pro residues. Over residues 400 to 409 (GAEAATPGSA) the composition is skewed to low complexity. Over residues 410-426 (QATSLPPSSTTVDSSTE) the composition is skewed to polar residues. Repeat 2 spans residues 416 to 444 (PSSTTVDSSTEGAPPPGPAPPPASSHPRV). 2 stretches are compositionally biased toward pro residues: residues 428–439 (APPPGPAPPPAS) and 508–521 (PTPP…PGGP). Composition is skewed to low complexity over residues 568 to 581 (AQAQ…AQAP) and 591 to 609 (PATA…TAGP). Tandem repeats lie at residues 597 to 624 (SAGT…QPSA) and 630 to 658 (SQLL…TVAM). Residues 611 to 622 (PGGPAQPPPPQP) show a composition bias toward pro residues. Disordered regions lie at residues 673-719 (QASQ…ESLP) and 968-1154 (PPQT…ADDP). A compositionally biased stretch (pro residues) spans 678-702 (APPPPPPPPPPPPAPEQQSTPPPGS). Phosphoserine is present on residues serine 986 and serine 995. A compositionally biased stretch (low complexity) spans 1029–1042 (AEPWAAAVPPEWVP). Residues 1032-1062 (WAAAVPPEWVPIIQQDIQSQRKVKPQPPLSD) form a required for interaction with GET4 region. The short motif at 1034-1076 (AAVPPEWVPIIQQDIQSQRKVKPQPPLSDAYLSGMPAKRRKTM) is the Nuclear localization site element. The sufficient for the delivery of client proteins to the endoplasmic reticulum stretch occupies residues 1044–1154 (IQQDIQSQRK…NAHRAFADDP (111 aa)). Threonine 1075 carries the post-translational modification Phosphothreonine. The segment at 1080-1137 (GPQLLLSEAVSRAAKAAGARPLTSPESLSRDLEAPEVQESYRQQLRSDIQKRLQEDPN) is BAG-similar domain, required and sufficient for interaction with UBL4A. Positions 1088–1098 (AVSRAAKAAGA) are enriched in low complexity. Phosphoserine occurs at positions 1103 and 1139.

As to quaternary structure, component of the BAG6/BAT3 complex, also named BAT3 complex, at least composed of BAG6, UBL4A and GET4/TRC35. Interacts with GET4; the interaction is direct and localizes BAG6 in the cytosol. Interacts with UBL4A; the interaction is direct and required for UBL4A protein stability. Interacts with AIFM1. Interacts with HSPA2. Interacts with CTCFL. Interacts with p300/EP300. Interacts (via ubiquitin-like domain) with RNF126; required for BAG6-dependent ubiquitination of proteins mislocalized to the cytosol. Interacts (via ubiquitin-like domain) with SGTA; SGTA competes with RNF126 by binding the same region of BAG6, thereby promoting deubiquitination of BAG6-target proteins and rescuing them from degradation. Interacts with ricin A chain. Interacts with VCP and AMFR; both form the VCP/p97-AMFR/gp78 complex. Interacts with SYVN1. Interacts with USP13; the interaction is direct and may mediate UBL4A deubiquitination. Interacts with ZFAND2B. Interacts with KPNA2. Interacts with UBQLN4. In terms of processing, ricin can induce a cleavage by the caspase CASP3. The released C-terminal peptide induces apoptosis.

It is found in the cytoplasm. The protein resides in the cytosol. The protein localises to the nucleus. Its subcellular location is the secreted. It localises to the extracellular exosome. ATP-independent molecular chaperone preventing the aggregation of misfolded and hydrophobic patches-containing proteins. Functions as part of a cytosolic protein quality control complex, the BAG6/BAT3 complex, which maintains these client proteins in a soluble state and participates in their proper delivery to the endoplasmic reticulum or alternatively can promote their sorting to the proteasome where they undergo degradation. The BAG6/BAT3 complex is involved in the post-translational delivery of tail-anchored/type II transmembrane proteins to the endoplasmic reticulum membrane. Recruited to ribosomes, it interacts with the transmembrane region of newly synthesized tail-anchored proteins and together with SGTA and ASNA1 mediates their delivery to the endoplasmic reticulum. Client proteins that cannot be properly delivered to the endoplasmic reticulum are ubiquitinated by RNF126, an E3 ubiquitin-protein ligase associated with BAG6 and are sorted to the proteasome. SGTA which prevents the recruitment of RNF126 to BAG6 may negatively regulate the ubiquitination and the proteasomal degradation of client proteins. Similarly, the BAG6/BAT3 complex also functions as a sorting platform for proteins of the secretory pathway that are mislocalized to the cytosol either delivering them to the proteasome for degradation or to the endoplasmic reticulum. The BAG6/BAT3 complex also plays a role in the endoplasmic reticulum-associated degradation (ERAD), a quality control mechanism that eliminates unwanted proteins of the endoplasmic reticulum through their retrotranslocation to the cytosol and their targeting to the proteasome. It maintains these retrotranslocated proteins in an unfolded yet soluble state condition in the cytosol to ensure their proper delivery to the proteasome. BAG6 is also required for selective ubiquitin-mediated degradation of defective nascent chain polypeptides by the proteasome. In this context, it may participate in the production of antigenic peptides and play a role in antigen presentation in immune response. BAG6 is also involved in endoplasmic reticulum stress-induced pre-emptive quality control, a mechanism that selectively attenuates the translocation of newly synthesized proteins into the endoplasmic reticulum and reroutes them to the cytosol for proteasomal degradation. BAG6 may ensure the proper degradation of these proteins and thereby protects the endoplasmic reticulum from protein overload upon stress. By inhibiting the polyubiquitination and subsequent proteasomal degradation of HSPA2 it may also play a role in the assembly of the synaptonemal complex during spermatogenesis. Also positively regulates apoptosis by interacting with and stabilizing the proapoptotic factor AIFM1. By controlling the steady-state expression of the IGF1R receptor, indirectly regulates the insulin-like growth factor receptor signaling pathway. In terms of biological role, involved in DNA damage-induced apoptosis: following DNA damage, accumulates in the nucleus and forms a complex with p300/EP300, enhancing p300/EP300-mediated p53/TP53 acetylation leading to increase p53/TP53 transcriptional activity. When nuclear, may also act as a component of some chromatin regulator complex that regulates histone 3 'Lys-4' dimethylation (H3K4me2). Functionally, released extracellularly via exosomes, it is a ligand of the natural killer/NK cells receptor NCR3 and stimulates NK cells cytotoxicity. It may thereby trigger NK cells cytotoxicity against neighboring tumor cells and immature myeloid dendritic cells (DC). Its function is as follows. May mediate ricin-induced apoptosis. This chain is Large proline-rich protein BAG6, found in Mus musculus (Mouse).